Consider the following 413-residue polypeptide: Transcription factor bHLH23 (413 aa).

The segment at S40 to L75 is disordered. The residue at position 186 (T186) is a Phosphothreonine. S191 is subject to Phosphoserine. Disordered stretches follow at residues T232–A278 and E391–S413. The segment covering T246 to T257 has biased composition (basic and acidic residues). The 50-residue stretch at R277–L326 folds into the bHLH domain.

As to quaternary structure, homodimer. In terms of tissue distribution, expressed constitutively in leaves, stems, and flowers.

It localises to the nucleus. The protein is Transcription factor bHLH23 (BHLH23) of Arabidopsis thaliana (Mouse-ear cress).